Consider the following 145-residue polypeptide: Aminoglycoside N(6')-acetyltransferase type 1 (145 aa).

The N-acetyltransferase domain maps to 1-145; it reads MNIKPASEAS…KVVYFSKKID (145 aa). Positions 22, 65, and 78 each coordinate substrate. Acetyl-CoA is bound at residue 80–82; sequence IYV. Position 114 (Asp-114) interacts with substrate. Residue Asn-119 participates in acetyl-CoA binding. Position 135 (Glu-135) interacts with substrate.

Homodimer.

The catalysed reaction is kanamycin B + acetyl-CoA = N(6')-acetylkanamycin B + CoA + H(+). In terms of biological role, catalyzes the transfer of an acetyl group from acetyl-CoA to the 6'-amino group of aminoglycoside molecules conferring resistance to antibiotics containing the purpurosamine ring including amikacin, kanamycin, tobramycin and netilmicin. The sequence is that of Aminoglycoside N(6')-acetyltransferase type 1 from Acinetobacter haemolyticus.